A 444-amino-acid polypeptide reads, in one-letter code: Presenilin sel-12 (444 aa).

Over 1-45 (MPSTRRQQEGGGADAETHTVYGTNLITNRNSQEDENVVEEAELKY) the chain is Cytoplasmic. The chain crosses the membrane as a helical span at residues 46–66 (GASHVIHLFVPVSLCMALVVF). Residues 67 to 101 (TMNTITFYSQNNGRHLLYTPFVRETDSIVEKGLMS) are Lumenal-facing. Residues 102–122 (LGNALVMLCVVVLMTVLLIVF) traverse the membrane as a helical segment. At 123 to 130 (YKYKFYKL) the chain is on the cytoplasmic side. Residues 131-151 (IHGWLIVSSFLLLFLFTTIYV) form a helical membrane-spanning segment. The Lumenal portion of the chain corresponds to 152–163 (QEVLKSFDVSPS). Residues 164-184 (ALLVLFGLGNYGVLGMMCIHW) form a helical membrane-spanning segment. Over 185–189 (KGPLR) the chain is Cytoplasmic. Residues 190–210 (LQQFYLITMSALMALVFIKYL) form a helical membrane-spanning segment. At 211 to 212 (PE) the chain is on the lumenal side. Residues 213-233 (WTVWFVLFVISVWDLVAVLTP) traverse the membrane as a helical segment. The active site involves D226. At 234-359 (KGPLRYLVET…RHEEEERGVK (126 aa)) the chain is on the cytoplasmic side. Residues 275–331 (TDPREPTSSDSNTSTAFPGEASCSSETPKRPKVKRIPQKVQIESNTTASTTQNSGVR) form a disordered region. Polar residues-rich tracts occupy residues 282 to 300 (SSDS…CSSE) and 315 to 329 (QIES…QNSG). Residues 360-380 (LGLGDFIFYSVLLGKASSYFD) traverse the membrane as a helical segment. D364 is an active-site residue. Residues 381-384 (WNTT) are Lumenal-facing. Residues 385 to 405 (IACYVAILIGLCFTLVLLAVF) traverse the membrane as a helical segment. Over 406 to 413 (KRALPALP) the chain is Cytoplasmic. The PAL motif lies at 410–412 (PAL). Residues 414–434 (ISIFSGLIFYFCTRWIITPFV) constitute an intramembrane region (helical). Topologically, residues 435–444 (TQVSQKCLLY) are cytoplasmic.

It belongs to the peptidase A22A family. Homodimer. Component of the gamma-secretase complex, a complex probably composed of the presenilin homodimer (sel-12, hop-1 or spe-4), nicastrin (aph-2), aph-1 and pen-2. Interacts with sel-10. As to expression, expressed in most neurons.

It is found in the endoplasmic reticulum membrane. The protein localises to the golgi apparatus membrane. Probable catalytic subunit of the gamma-secretase complex, an endoprotease complex that catalyzes the intramembrane cleavage of integral membrane proteins such as Notch receptors (lin-12 or glp-1). Provides the major presenilin function compared to hop-1 and spe-4. Required cell-autonomously for correct neurite connectivity of the AIY cholinergic interneurons and their correct functioning in thermotaxis. Required for mesodermal patterning of muscle function. Promotes basement membrane gap formation during tissue remodeling. This chain is Presenilin sel-12, found in Caenorhabditis elegans.